The sequence spans 318 residues: C1GALT1-specific chaperone 1 (318 aa).

Residues 1 to 6 (MLSESS) are Cytoplasmic-facing. A helical; Signal-anchor for type II membrane protein transmembrane segment spans residues 7–26 (SFLKGVMLGSIFCALITMLG). Over 27-318 (HIRIGHGNRM…FLPPNGSDND (292 aa)) the chain is Lumenal.

The protein belongs to the glycosyltransferase 31 family. Beta3-Gal-T subfamily. In terms of assembly, associates with core 1 beta-3-galactosyltransferase (C1GALT1), probably not with the soluble active form. As to expression, ubiquitously expressed. Abundantly expressed in salivary gland, stomach, small intestine, kidney, and testis and at intermediate levels in whole brain, cerebellum, spinal cord, thymus, spleen, trachea, lung, pancreas, ovary, and uterus.

It is found in the membrane. Functionally, probable chaperone required for the generation of 1 O-glycan Gal-beta1-3GalNAc-alpha1-Ser/Thr (T antigen), which is a precursor for many extended O-glycans in glycoproteins. Probably acts as a specific molecular chaperone assisting the folding/stability of core 1 beta-3-galactosyltransferase (C1GALT1). This chain is C1GALT1-specific chaperone 1 (C1GALT1C1), found in Homo sapiens (Human).